A 1190-amino-acid polypeptide reads, in one-letter code: MTGRLVQYGRHRQRRSYARISEVLELPNLIEIQTSSYQWFLDEGLREMFKEISPIEDFSGNLSLEFIDYSLGEPKYSVEEAKERDVTYAAPLRVKVRLINKETGEVKEQDVFMGDFPLMTETGTFIINGAERVIVSQLVRSPSVYYSDKVDKNGKRGYSATVIPNRGAWLEYETDAKDVVYVRIDRTRKLPVTVLLRALGFSSDQEIIDLLGDNEYLRNTLEKDNTDSTEKALIEIYERLRPGEPPTLENAKSLLASRFFDPKRYDLASVGRYKINKKLHIKNRLFNQRLAETIADPETGEIIAEAGTMIDRRTLNRLLPYLEKGAGLQTYRPTEGVADGQISVQTVKIYAPNDPDNEKVINIIGNGFIAEDVKHITPADIIASISYFFNLLHGVGDTDDIDHLGNRRLRSVGELLQNQFRIGLSRMERVVRERMSIQDANTITPQQLINIRPVIAAIKEFFGSSQLSQFMDQTNPLAELTHKRRLSALGPGGLTRERAGFEVRDVHYSHYGRMCPIETPEGPNIGLINSLSTYAKVNKFGFIETPYRRVDPETGKVTDQIDYLTADEEDNYVVAQANVPLAEDGTFLEENVIARFRGENIVVKRDRVDYMDVSPKQVVSAATACIPFLENDDSNRALMGANMQRQAVPLLQPEAPIVGTGMEYVSAKDSGAAIICKHRGIVERVEAKEIWVRRLIEVDGKEVKGDLDKYRLLKFVRSNQGTCYNQRPIVKKGDIVEKGEILADGPSMDKGELALGRNVLVAFMTWDGYNYEDAIIMSERLVKEDVYTSIHIEEYEAESRDTKLGPEEITRDIPNVGEDALKNLDERGIVRIGAEVKDGDLLVGKVTPKGMTELTAEERLLHAIFGEKAREVRDTSLRVPHGGGGIVLDVKVFNREDGDELPPGVNQLVRVYIVQKRKISEGDKMAGRHGNKGVISRILPEEDMPFLPDGTPIDIMLNPLGVPSRMNIGQVFELHLGMAAKKLGLHIASPVFDGATEEDVWNILEEAGMARDAKTVLYDGRTGEPFDNRVSVGIMYMIKLAHMVDDKLHARSTGPYSLVTQQPLGGKAQFGGQRFGEMEVWALEAYGAAYTLQEILTVKSDDVVGRVKTYEAIVKGENIPEPGVPESFKVLIKELQSLGMDVTILTSDEQEINMENFDDDDDHAPDAIMVDVKPVESEEADEEKNAVTKE.

Belongs to the RNA polymerase beta chain family. As to quaternary structure, the RNAP catalytic core consists of 2 alpha, 1 beta, 1 beta' and 1 omega subunit. When a sigma factor is associated with the core the holoenzyme is formed, which can initiate transcription.

The catalysed reaction is RNA(n) + a ribonucleoside 5'-triphosphate = RNA(n+1) + diphosphate. In terms of biological role, DNA-dependent RNA polymerase catalyzes the transcription of DNA into RNA using the four ribonucleoside triphosphates as substrates. The polypeptide is DNA-directed RNA polymerase subunit beta (Geobacillus thermodenitrificans (strain NG80-2)).